A 93-amino-acid polypeptide reads, in one-letter code: YcgL domain-containing protein Spea_2443 (93 aa).

In terms of domain architecture, YcgL spans 1-85 (MICAVYKSLR…PVVNLLEQHK (85 aa)).

The chain is YcgL domain-containing protein Spea_2443 from Shewanella pealeana (strain ATCC 700345 / ANG-SQ1).